Reading from the N-terminus, the 199-residue chain is Oleosin 21.2 kDa (199 aa).

Residues 1–14 (MADTHRVDRTDRHF) are compositionally biased toward basic and acidic residues. The tract at residues 1 to 31 (MADTHRVDRTDRHFQFQSPYEGGRGQGQYEG) is disordered. Residue alanine 2 is modified to N-acetylalanine. Residues 2 to 56 (ADTHRVDRTDRHFQFQSPYEGGRGQGQYEGDRGYGGGGYKSMMPESGPSSTQVLS) are polar. Positions 22–31 (GGRGQGQYEG) are enriched in gly residues. Transmembrane regions (helical) follow at residues 51–71 (STQV…LALA), 72–92 (GLLL…FLLF), and 96–116 (IVPA…SGMF). Residues 57-128 (LLIGVPVVGS…TGLSSISWVM (72 aa)) form a hydrophobic region. Residues 159–199 (KGKEMGQHVQNKAQDVKQYDISKPHDTTTKGHETQGRTTAA) form a disordered region. Residues 172-193 (QDVKQYDISKPHDTTTKGHETQ) are compositionally biased toward basic and acidic residues.

The protein belongs to the oleosin family.

It localises to the lipid droplet. The protein resides in the membrane. May have a structural role to stabilize the lipid body during desiccation of the seed by preventing coalescence of the oil. Probably interacts with both lipid and phospholipid moieties of lipid bodies. May also provide recognition signals for specific lipase anchorage in lipolysis during seedling growth. This is Oleosin 21.2 kDa from Arabidopsis thaliana (Mouse-ear cress).